The primary structure comprises 316 residues: Glutathione synthetase (316 aa).

The region spanning 124 to 311 (NEKLAALLFP…IAGLLFDAIE (188 aa)) is the ATP-grasp domain. 151-208 (FVLEHGQAVLKPLDGMGGRSIFRSGSGDPNLNVILETLTDGNRKLTLAQRFIPDITAG) contacts ATP. Mg(2+)-binding residues include Glu282 and Asn284.

It belongs to the prokaryotic GSH synthase family. Requires Mg(2+) as cofactor. The cofactor is Mn(2+).

It carries out the reaction gamma-L-glutamyl-L-cysteine + glycine + ATP = glutathione + ADP + phosphate + H(+). It functions in the pathway sulfur metabolism; glutathione biosynthesis; glutathione from L-cysteine and L-glutamate: step 2/2. This is Glutathione synthetase from Xanthomonas axonopodis pv. citri (strain 306).